The following is a 378-amino-acid chain: Zinc finger protein DPF3 (378 aa).

Lys-99 is covalently cross-linked (Glycyl lysine isopeptide (Lys-Gly) (interchain with G-Cter in SUMO2)). The tract at residues 146–193 (LENDENVEEGNEEEDLEEDVPKRKNRTRGRARGSAGGRRRHDAASQED) is disordered. Residues 148 to 163 (NDENVEEGNEEEDLEE) show a composition bias toward acidic residues. The span at 168–186 (RKNRTRGRARGSAGGRRRH) shows a compositional bias: basic residues. The C2H2-type zinc-finger motif lies at 198–221 (YVCDICGKRYKNRPGLSYHYAHTH). Residues 225-254 (EEGDEAQDQETRSPPNHRNENHRPQKGPDG) are disordered. 2 consecutive PHD-type zinc fingers follow at residues 259–319 (NNYC…CKSC) and 316–366 (CKSC…CWEL). The segment at 317-332 (KSCILCGTSENDDQLL) is interaction with HDGFL2. A Phosphoserine modification is found at Gly-323.

It belongs to the requiem/DPF family. As to quaternary structure, component of the BAF complex, which includes at least actin (ACTB), ARID1A, ARID1B/BAF250, SMARCA2, SMARCA4/BRG1/BAF190A, ACTL6A/BAF53, ACTL6B/BAF53B, SMARCE1/BAF57, SMARCC1/BAF155, SMARCC2/BAF170, SMARCB1/SNF5/INI1, and one or more of SMARCD1/BAF60A, SMARCD2/BAF60B, or SMARCD3/BAF60C. In muscle cells, the BAF complex also contains DPF3. Interacts with acetylated histones H3 and H4. Component of neuron-specific chromatin remodeling complex (nBAF complex) composed of at least, ARID1A/BAF250A or ARID1B/BAF250B, SMARCD1/BAF60A, SMARCD3/BAF60C, SMARCA2/BRM/BAF190B, SMARCA4/BRG1/BAF190A, SMARCB1/BAF47, SMARCC1/BAF155, SMARCE1/BAF57, SMARCC2/BAF170, DPF1/BAF45B, DPF3/BAF45C, ACTL6B/BAF53B and actin. Interacts with HDGFL2. Interacts with SMARCA4/BRG1/BAF190A, SMARCC1/BAF155 and SMARCD1/BAF60A. Expressed in the heart and somites. Expressed in cerebellum and spinal cord, but not in cerebral cortex. Expressed specifically in post-mitotic neurons (at protein level).

Its subcellular location is the nucleus. Functionally, muscle-specific component of the BAF complex, a multiprotein complex involved in transcriptional activation and repression of select genes by chromatin remodeling (alteration of DNA-nucleosome topology). Specifically binds acetylated lysines on histone 3 and 4 (H3K14ac, H3K9ac, H4K5ac, H4K8ac, H4K12ac, H4K16ac). In the complex, it acts as a tissue-specific anchor between histone acetylations and methylations and chromatin remodeling. It thereby probably plays an essential role in heart and skeletal muscle development. Belongs to the neuron-specific chromatin remodeling complex (nBAF complex). During neural development a switch from a stem/progenitor to a post-mitotic chromatin remodeling mechanism occurs as neurons exit the cell cycle and become committed to their adult state. The transition from proliferating neural stem/progenitor cells to post-mitotic neurons requires a switch in subunit composition of the npBAF and nBAF complexes. As neural progenitors exit mitosis and differentiate into neurons, npBAF complexes which contain ACTL6A/BAF53A and PHF10/BAF45A, are exchanged for homologous alternative ACTL6B/BAF53B and DPF1/BAF45B or DPF3/BAF45C subunits in neuron-specific complexes (nBAF). The npBAF complex is essential for the self-renewal/proliferative capacity of the multipotent neural stem cells. The nBAF complex along with CREST plays a role regulating the activity of genes essential for dendrite growth. Its function is as follows. Acts as a regulator of myogenesis in cooperation with HDGFL2. Mediates the interaction of HDGFL2 with the BAF complex. HDGFL2-DPF3a activate myogenic genes by increasing chromatin accessibility through recruitment of SMARCA4/BRG1/BAF190A (ATPase subunit of the BAF complex) to myogenic gene promoters. This chain is Zinc finger protein DPF3 (Dpf3), found in Mus musculus (Mouse).